A 156-amino-acid polypeptide reads, in one-letter code: Small ribosomal subunit protein uS7 (156 aa).

It belongs to the universal ribosomal protein uS7 family. As to quaternary structure, part of the 30S ribosomal subunit. Contacts proteins S9 and S11.

In terms of biological role, one of the primary rRNA binding proteins, it binds directly to 16S rRNA where it nucleates assembly of the head domain of the 30S subunit. Is located at the subunit interface close to the decoding center, probably blocks exit of the E-site tRNA. In Magnetococcus marinus (strain ATCC BAA-1437 / JCM 17883 / MC-1), this protein is Small ribosomal subunit protein uS7.